A 119-amino-acid polypeptide reads, in one-letter code: uncharacterized protein (119 aa).

The disordered stretch occupies residues 64–119 (SAPLGLKEVQKKSNEGLNEVQGAADINKQKRPANSQDSSSVEGDIQNFLEKVTGKN). Polar residues predominate over residues 95–104 (PANSQDSSSV).

This is an uncharacterized protein from Nostoc sp. (strain PCC 7120 / SAG 25.82 / UTEX 2576).